The sequence spans 542 residues: Adenine deaminase (542 aa).

It belongs to the metallo-dependent hydrolases superfamily. Adenine deaminase family. Mn(2+) is required as a cofactor.

The catalysed reaction is adenine + H2O + H(+) = hypoxanthine + NH4(+). The chain is Adenine deaminase from Methanosphaera stadtmanae (strain ATCC 43021 / DSM 3091 / JCM 11832 / MCB-3).